The primary structure comprises 1097 residues: DNA-directed RNA polymerase subunit beta (1097 aa).

Positions 1072–1097 are disordered; that stretch reads QDINPRRNTPSRPTYESLGTSEYEED. The segment covering 1077–1091 has biased composition (polar residues); the sequence is RRNTPSRPTYESLGT.

This sequence belongs to the RNA polymerase beta chain family. In cyanobacteria the RNAP catalytic core is composed of 2 alpha, 1 beta, 1 beta', 1 gamma and 1 omega subunit. When a sigma factor is associated with the core the holoenzyme is formed, which can initiate transcription.

It catalyses the reaction RNA(n) + a ribonucleoside 5'-triphosphate = RNA(n+1) + diphosphate. In terms of biological role, DNA-dependent RNA polymerase catalyzes the transcription of DNA into RNA using the four ribonucleoside triphosphates as substrates. In Prochlorococcus marinus (strain MIT 9301), this protein is DNA-directed RNA polymerase subunit beta.